Consider the following 145-residue polypeptide: D-aminoacyl-tRNA deacylase (145 aa).

The short motif at 137–138 (GP) is the Gly-cisPro motif, important for rejection of L-amino acids element.

This sequence belongs to the DTD family. Homodimer.

Its subcellular location is the cytoplasm. It catalyses the reaction glycyl-tRNA(Ala) + H2O = tRNA(Ala) + glycine + H(+). The catalysed reaction is a D-aminoacyl-tRNA + H2O = a tRNA + a D-alpha-amino acid + H(+). Its function is as follows. An aminoacyl-tRNA editing enzyme that deacylates mischarged D-aminoacyl-tRNAs. Also deacylates mischarged glycyl-tRNA(Ala), protecting cells against glycine mischarging by AlaRS. Acts via tRNA-based rather than protein-based catalysis; rejects L-amino acids rather than detecting D-amino acids in the active site. By recycling D-aminoacyl-tRNA to D-amino acids and free tRNA molecules, this enzyme counteracts the toxicity associated with the formation of D-aminoacyl-tRNA entities in vivo and helps enforce protein L-homochirality. This is D-aminoacyl-tRNA deacylase from Shewanella woodyi (strain ATCC 51908 / MS32).